Here is a 373-residue protein sequence, read N- to C-terminus: Indole glucosinolate O-methyltransferase 1 (373 aa).

Residues G217, D240, D260, M261, and K274 each contribute to the S-adenosyl-L-homocysteine site. The active-site Proton acceptor is H278.

This sequence belongs to the class I-like SAM-binding methyltransferase superfamily. Cation-independent O-methyltransferase family. As to quaternary structure, interacts with B'GAMMA.

It participates in secondary metabolite biosynthesis. Functionally, involved in indole glucosinolate biosynthesis. Catalyzes methoxylation reactions of the glucosinolate indole ring. Converts the hydroxy intermediates 4-hydroxy-indol-3-yl-methylglucosinolate (4OH-I3M) and 1-hydroxy-indol-3-yl-methylglucosinolate (1OH-I3M) to 4-methoxy-indol-3-yl-methylglucosinolate (4MO-I3M) and 1-methoxy-indol-3-yl-methylglucosinolate (1MO-I3M), respectively. This chain is Indole glucosinolate O-methyltransferase 1, found in Arabidopsis thaliana (Mouse-ear cress).